The following is an 890-amino-acid chain: tRNase Z TRZ3, mitochondrial (890 aa).

The transit peptide at 1–44 directs the protein to the mitochondrion; it reads MINSMPYLHKNLRLLRLLSSKSSPFPLSLRPFSPRSFSLSTLFS. The segment at 46-67 is disordered; the sequence is SSSSSSMENNEATNGSKSSSNS.

It belongs to the RNase Z family. Homodimer. Zn(2+) serves as cofactor. It depends on Ca(2+) as a cofactor. Mn(2+) is required as a cofactor. Requires Mg(2+) as cofactor.

The protein localises to the mitochondrion. It is found in the nucleus. It carries out the reaction Endonucleolytic cleavage of RNA, removing extra 3' nucleotides from tRNA precursor, generating 3' termini of tRNAs. A 3'-hydroxy group is left at the tRNA terminus and a 5'-phosphoryl group is left at the trailer molecule.. In terms of biological role, zinc phosphodiesterase, which displays tRNA 3'-processing endonuclease activity. Involved in tRNA maturation, by removing a 3'-trailer from precursor tRNA. Can process the mitochondrial tRNA-like structures (t-elements). Involved in the processing of small nucleolar RNAs (snoRNAs). In Arabidopsis thaliana (Mouse-ear cress), this protein is tRNase Z TRZ3, mitochondrial.